A 358-amino-acid chain; its full sequence is Molybdenum import ATP-binding protein ModC (358 aa).

The ABC transporter domain occupies 2–234; sequence NDDISASFFS…PDLPLAHLEE (233 aa). 34–41 serves as a coordination point for ATP; it reads GRSGSGKT. A Mop domain is found at 293–358; it reads LSSISNCIPV…AQVKSVALID (66 aa).

It belongs to the ABC transporter superfamily. Molybdate importer (TC 3.A.1.8) family. The complex is composed of two ATP-binding proteins (ModC), two transmembrane proteins (ModB) and a solute-binding protein (ModA).

The protein localises to the cell inner membrane. The catalysed reaction is molybdate(out) + ATP + H2O = molybdate(in) + ADP + phosphate + H(+). Its function is as follows. Part of the ABC transporter complex ModABC involved in molybdenum import. Responsible for energy coupling to the transport system. The protein is Molybdenum import ATP-binding protein ModC of Hahella chejuensis (strain KCTC 2396).